Reading from the N-terminus, the 254-residue chain is Major prion protein (254 aa).

The N-terminal stretch at 1 to 22 (MANLSYWLLALFVATWTDVGLC) is a signal peptide. The tract at residues 23–231 (KKRPKPGGWN…SQAYYDGRRS (209 aa)) is interaction with GRB2, ERI3 and SYN1. The disordered stretch occupies residues 25 to 104 (RPKPGGWNTG…THNQWNKPSK (80 aa)). Repeat copies occupy residues 51–59 (PQGGGTWGQ), 60–67 (PHGGGWGQ), 68–75 (PHGGGWGQ), 76–83 (PHGGGWGQ), and 84–91 (PHGGGWGQ). The segment at 51–91 (PQGGGTWGQPHGGGWGQPHGGGWGQPHGGGWGQPHGGGWGQ) is 5 X 8 AA tandem repeats of P-H-G-G-G-W-G-Q. Residues 52-95 (QGGGTWGQPHGGGWGQPHGGGWGQPHGGGWGQPHGGGWGQGGGT) are compositionally biased toward gly residues. Positions 61, 62, 63, 69, 70, 71, 77, 78, 79, 85, 86, and 87 each coordinate Cu(2+). Residues 90–231 (GQGGGTHNQW…SQAYYDGRRS (142 aa)) form a prP27-30 (protease resistant core) region. The cysteines at positions 179 and 214 are disulfide-linked. 2 N-linked (GlcNAc...) asparagine glycosylation sites follow: Asn-181 and Asn-197. Ser-231 carries GPI-anchor amidated serine lipidation. Positions 232-254 (SAVLFSSPPVILLISFLIFLIVG) are cleaved as a propeptide — removed in mature form.

The protein belongs to the prion family. In terms of assembly, monomer and homodimer. Has a tendency to aggregate into amyloid fibrils containing a cross-beta spine, formed by a steric zipper of superposed beta-strands. Soluble oligomers may represent an intermediate stage on the path to fibril formation. Copper binding may promote oligomerization. Interacts with GRB2, APP, ERI3/PRNPIP and SYN1. Mislocalized cytosolically exposed PrP interacts with MGRN1; this interaction alters MGRN1 subcellular location and causes lysosomal enlargement. Interacts with KIAA1191.

Its subcellular location is the cell membrane. It is found in the golgi apparatus. Its function is as follows. Its primary physiological function is unclear. Has cytoprotective activity against internal or environmental stresses. May play a role in neuronal development and synaptic plasticity. May be required for neuronal myelin sheath maintenance. May play a role in iron uptake and iron homeostasis. Soluble oligomers are toxic to cultured neuroblastoma cells and induce apoptosis (in vitro). Association with GPC1 (via its heparan sulfate chains) targets PRNP to lipid rafts. Also provides Cu(2+) or Zn(2+) for the ascorbate-mediated GPC1 deaminase degradation of its heparan sulfate side chains. This chain is Major prion protein (PRNP), found in Cricetulus griseus (Chinese hamster).